A 148-amino-acid chain; its full sequence is UPF0260 protein YPK_2117 (148 aa).

It belongs to the UPF0260 family.

The sequence is that of UPF0260 protein YPK_2117 from Yersinia pseudotuberculosis serotype O:3 (strain YPIII).